The following is a 176-amino-acid chain: Cathelicidin-2 (176 aa).

An N-terminal signal peptide occupies residues 1–29; sequence METQGASLSLGRWSLWLLLLGLVVPLASA. Gln-30 is subject to Pyrrolidone carboxylic acid. Positions 30–130 are excised as a propeptide; it reads QALSYREAVL…DINCNELQSV (101 aa). Cystine bridges form between Cys-85–Cys-96 and Cys-107–Cys-124. Positions 135–176 are disordered; it reads PIRRPPIRPPFNPPFRPPVRPPFRPPFRPPFRPPIGPFPGRR. Pro residues predominate over residues 141–176; that stretch reads IRPPFNPPFRPPVRPPFRPPFRPPFRPPIGPFPGRR. Pro-173 is subject to Proline amide. Residues 174-176 constitute a propeptide, removed in mature form; the sequence is GRR.

The protein belongs to the cathelicidin family. Post-translationally, elastase is responsible for its maturation.

It is found in the secreted. Functionally, binds to the lipid A moiety of bacterial lipopolysaccharides (LPS), a glycolipid present in the outer membrane of all Gram-negative bacteria. Shows a potent antimicrobial activity against the Gram-negative bacteria E.coli, S.typhimurium and P.aeruginosa. Less active against the Gram-positive bacteria S.aureus, L.monocytogenes and B.subtilis. The chain is Cathelicidin-2 (CATHL2) from Capra hircus (Goat).